The sequence spans 591 residues: V-type ATP synthase alpha chain (591 aa).

233–240 is an ATP binding site; sequence GPFGAGKT.

This sequence belongs to the ATPase alpha/beta chains family.

It carries out the reaction ATP + H2O + 4 H(+)(in) = ADP + phosphate + 5 H(+)(out). Its function is as follows. Produces ATP from ADP in the presence of a proton gradient across the membrane. The V-type alpha chain is a catalytic subunit. This chain is V-type ATP synthase alpha chain, found in Streptococcus pneumoniae (strain Hungary19A-6).